We begin with the raw amino-acid sequence, 381 residues long: Homoserine O-succinyltransferase (381 aa).

The AB hydrolase-1 domain occupies 45–360 (NAVLVCHALN…PHGHDAFLLD (316 aa)). S151 serves as the catalytic Nucleophile. R221 is a binding site for substrate. Residues D321 and H354 contribute to the active site. Position 355 (D355) interacts with substrate.

This sequence belongs to the AB hydrolase superfamily. MetX family. Homodimer.

The protein localises to the cytoplasm. It catalyses the reaction L-homoserine + succinyl-CoA = O-succinyl-L-homoserine + CoA. Its pathway is amino-acid biosynthesis; L-methionine biosynthesis via de novo pathway; O-succinyl-L-homoserine from L-homoserine: step 1/1. Its function is as follows. Transfers a succinyl group from succinyl-CoA to L-homoserine, forming succinyl-L-homoserine. This is Homoserine O-succinyltransferase from Paraburkholderia phymatum (strain DSM 17167 / CIP 108236 / LMG 21445 / STM815) (Burkholderia phymatum).